A 354-amino-acid chain; its full sequence is Peptide chain release factor 1 (354 aa).

An N5-methylglutamine modification is found at glutamine 230.

This sequence belongs to the prokaryotic/mitochondrial release factor family. In terms of processing, methylated by PrmC. Methylation increases the termination efficiency of RF1.

The protein localises to the cytoplasm. Peptide chain release factor 1 directs the termination of translation in response to the peptide chain termination codons UAG and UAA. This Novosphingobium aromaticivorans (strain ATCC 700278 / DSM 12444 / CCUG 56034 / CIP 105152 / NBRC 16084 / F199) protein is Peptide chain release factor 1.